Reading from the N-terminus, the 350-residue chain is Putative isomerase YbhH (350 aa).

This sequence belongs to the PrpF family.

The chain is Putative isomerase YbhH (ybhH) from Escherichia coli O6:H1 (strain CFT073 / ATCC 700928 / UPEC).